Reading from the N-terminus, the 492-residue chain is METQWTRMTANEAAEIIQHNDMVAFSGFTPAGSPKALPTAIARRANEQHEAKKPYQIRLLTGASISAAADDVLSDADAVSWRAPYQTSSGLRKKINQGAVSFVDLHLSEVAQMVNYGFFGDIDVAVIEASALAPDGRVWLTSGIGNAPTWLLRAKKVIIELNHYHDPRVAELADIVIPGAPPRRNSVSIFHAMDRVGTRYVQIDPKKIVAVVETNLPDAGNMLDKQNPMCQQIADNVVTFLLQEMAHGRIPPEFLPLQSGVGNINNAVMARLGENPVIPPFMMYSEVLQESVVHLLETGKISGASASSLTISADSLRKIYDNMDYFASRIVLRPQEISNNPEIIRRLGVIALNVGLEFDIYGHANSTHVAGVDLMNGIGGSGDFERNAYLSIFMAPSIAKEGKISTVVPMCSHVDHSEHSVKVIITEQGIADLRGLSPLQRARTIIDNCAHPMYRDYLHRYLENAPGGHIHHDLSHVFDLHRNLIATGSMLG.

260–264 contacts CoA; that stretch reads GVGNI. Residue glutamate 286 is the 5-glutamyl coenzyme A thioester intermediate of the active site. CoA is bound by residues asparagine 376 and glycine 380.

Belongs to the acetyl-CoA hydrolase/transferase family.

The catalysed reaction is propanoyl-CoA + succinate = propanoate + succinyl-CoA. In terms of biological role, catalyzes the transfer of coenzyme A from propionyl-CoA to succinate. Could be part of a pathway that converts succinate to propionate. This Escherichia coli (strain K12) protein is Propanoyl-CoA:succinate CoA transferase.